The following is a 347-amino-acid chain: NADH-ubiquinone oxidoreductase chain 2 (347 aa).

10 consecutive transmembrane segments (helical) span residues 13 to 33, 59 to 79, 96 to 116, 122 to 142, 149 to 169, 178 to 198, 201 to 221, 247 to 267, 274 to 294, and 323 to 343; these read IILG…WIGF, YFLT…TNLL, AVMT…FWVP, IPLS…LSVL, VSPT…GWGG, ILAY…AYNP, TLLN…LFMF, IMLS…WMII, ESLL…YFYM, and VPLL…APAL.

It belongs to the complex I subunit 2 family. As to quaternary structure, core subunit of respiratory chain NADH dehydrogenase (Complex I) which is composed of 45 different subunits. Interacts with TMEM242.

The protein resides in the mitochondrion inner membrane. It carries out the reaction a ubiquinone + NADH + 5 H(+)(in) = a ubiquinol + NAD(+) + 4 H(+)(out). Functionally, core subunit of the mitochondrial membrane respiratory chain NADH dehydrogenase (Complex I) which catalyzes electron transfer from NADH through the respiratory chain, using ubiquinone as an electron acceptor. Essential for the catalytic activity and assembly of complex I. The protein is NADH-ubiquinone oxidoreductase chain 2 of Megaderma spasma (Lesser false vampire bat).